Here is a 174-residue protein sequence, read N- to C-terminus: MDNGLFIVVTIFVVNILYVTIYTVRLLLTMKGYRYLAALSSVFEMIIYVVALSLVLDNLNNIANVLAYAIGFGVGVIVGMKIEERIALGYITVNVITKEYNLDLPNQIRDLGYGVTSWIASGRDGERMMLEILTQRKNERKLYKQIIEIDNGAFIVSSEPKQIHGGFWIKQVRK.

3 consecutive transmembrane segments (helical) span residues 4–24 (GLFIVVTIFVVNILYVTIYTV), 36–56 (LAALSSVFEMIIYVVALSLVL), and 62–82 (IANVLAYAIGFGVGVIVGMKI).

This sequence belongs to the UPF0316 family.

It is found in the cell membrane. The sequence is that of UPF0316 protein lwe1794 from Listeria welshimeri serovar 6b (strain ATCC 35897 / DSM 20650 / CCUG 15529 / CIP 8149 / NCTC 11857 / SLCC 5334 / V8).